A 391-amino-acid polypeptide reads, in one-letter code: Phosphoglycerate kinase (391 aa).

Residues 19-21 (DYN), Arg35, 58-61 (HMGR), Arg117, and Arg150 each bind substrate. Residues Lys201, Glu323, and 349 to 352 (GGDT) contribute to the ATP site.

Belongs to the phosphoglycerate kinase family. As to quaternary structure, monomer.

The protein resides in the cytoplasm. It catalyses the reaction (2R)-3-phosphoglycerate + ATP = (2R)-3-phospho-glyceroyl phosphate + ADP. It functions in the pathway carbohydrate degradation; glycolysis; pyruvate from D-glyceraldehyde 3-phosphate: step 2/5. The polypeptide is Phosphoglycerate kinase (Desulforapulum autotrophicum (strain ATCC 43914 / DSM 3382 / VKM B-1955 / HRM2) (Desulfobacterium autotrophicum)).